Here is a 555-residue protein sequence, read N- to C-terminus: Urocanate hydratase (555 aa).

NAD(+)-binding positions include G51–G52, Q129, G175–G177, E195, N241–A242, Q262–H266, Y272–L273, and Y321. C409 is a catalytic residue. Residue G491 participates in NAD(+) binding.

This sequence belongs to the urocanase family. NAD(+) is required as a cofactor.

It is found in the cytoplasm. The catalysed reaction is 4-imidazolone-5-propanoate = trans-urocanate + H2O. The protein operates within amino-acid degradation; L-histidine degradation into L-glutamate; N-formimidoyl-L-glutamate from L-histidine: step 2/3. Its function is as follows. Catalyzes the conversion of urocanate to 4-imidazolone-5-propionate. In Hyphomonas neptunium (strain ATCC 15444), this protein is Urocanate hydratase.